The primary structure comprises 161 residues: Phosphopantetheine adenylyltransferase (161 aa).

Residue Ser10 participates in substrate binding. ATP contacts are provided by residues 10–11 and His18; that span reads SF. Residues Lys42, Ala75, and Arg89 each coordinate substrate. Residues 90 to 92, Glu100, and 125 to 131 each bind ATP; these read GLR and LSPISSS.

It belongs to the bacterial CoaD family. Homohexamer. The cofactor is Mg(2+).

It is found in the cytoplasm. The enzyme catalyses (R)-4'-phosphopantetheine + ATP + H(+) = 3'-dephospho-CoA + diphosphate. It participates in cofactor biosynthesis; coenzyme A biosynthesis; CoA from (R)-pantothenate: step 4/5. Reversibly transfers an adenylyl group from ATP to 4'-phosphopantetheine, yielding dephospho-CoA (dPCoA) and pyrophosphate. The polypeptide is Phosphopantetheine adenylyltransferase (Streptococcus agalactiae serotype Ia (strain ATCC 27591 / A909 / CDC SS700)).